Consider the following 1272-residue polypeptide: MFNKDLTIDNLFTEDVIIDPTKTQFSKTFQNDIELDTKEIRWIFYADMEMHGRKGVDIAFPTRFEVMKTLKINKYSFLTGNDFSSGMGIIMEISRNTITLHIPKEPCFKNITFLTMGYGSGSQMTLAGPKPKLEFNNPAVVAWINSILSYLPGVENSIFEKGGDYFPNSNDERVAYTIWDRMDRIEFLDEIEKAELKKRRKEGNLTIEEAVNIEIKSAVNFYTNFSNQGVLQNTPYGYLTALLSFKNSAEEKEKKLRLSKKKEQLEKIQEYLDANQFENALKMLGEESIAKDSLKRYYKIVTDDLVYGGLNDYINVVFEKYEELEKIQADTHTQIKNELEESVYIFINTLQMRGSDNLASKKNALESYDSQFYLTGEMLGKTAANMINKQNKTSADRKIIEKKTARTSVTFNSIMERRQAMDRINQKIIDREGAIRQSMLVKERLLIAASDIDDIPIDGIHYVYNQEESELLASAQRLNLTVGEESLNLVEVLVSRLNRGMPNKFLEITEEFIEYLKLIMGELSFVVTGTHFDWPEINNLITFNVMASDEVPWRSIDEMKDMLELTKSLDIVFPFDKRFAATKNEELNISEFLNSYPGFSLPSVKAALGKDLEKLIKLVNDHDQEIQKIYKEVEKLNTVILKAVTDGTRTENINDVGGVVKRLDAVAKSGFSKEVTGWKLLEYICDYYSNLSLPPSFNILRRMTDTERGLFTYFTTRYAGKIEIFEEEDRVYEVLLEKIHSQTMLDLVKDNKEKAIKKIKDFILHHCKEYKGEFESTNTTAYMNRLEIIKIEDPGFAEISRGMMAGVDDKFFPALDELLKKWRRTDMEGYVHGVLNQGIGDILALTEIKKNVKEPEVVFETTAINLIKKLAAITKPYDVDAFKINEVDYDIMDSLLTGIFLNKYLAFIPIAELSKDRYLAANVSEVKLNNYTVVTFEDLLAQSARRRGDDGDVAMMTSDTKKQAIDFAIEKLKKHDINTIPIMMFYEFINDRFKKRLSDVNFNRNTLTDEGTPLRIIMDGNTFRQMPVYIYDDLLRKKNIGAQNTIGQALTLTRIVNLVPYEETLMVNDPTETSTDLEWDPLIQSTPSGLSFYDDDIPRPTNLPGLEALRTPSIFSEINVITPGFIQQPPPTDPALALQFLTNRTEVQNLLNEYEVSTPGPTDTQDMFVISDTLAPIPELPETSQQPVVPTPPATRPSSPIPPESDILTEEEQLEEQPPRQQQATRKTTTTVSIEAEDFIAYLRLKTLEQQMVDELKSILPPDTEEEEEEEE.

Coiled-coil stretches lie at residues 185–212 (IEFL…EAVN), 246–274 (KNSA…YLDA), and 607–640 (ALGK…NTVI). The disordered stretch occupies residues 1179–1231 (ELPETSQQPVVPTPPATRPSSPIPPESDILTEEEQLEEQPPRQQQATRKTTTT). Residues 1189–1203 (VPTPPATRPSSPIPP) are compositionally biased toward pro residues. A compositionally biased stretch (low complexity) spans 1219-1231 (PRQQQATRKTTTT).

This is an uncharacterized protein from Magallana gigas (Pacific oyster).